The chain runs to 468 residues: UDP-N-acetylmuramoyl-L-alanine--L-glutamate ligase (468 aa).

122–128 (GTKGKST) serves as a coordination point for ATP.

It belongs to the MurCDEF family. MurD2 subfamily.

The protein resides in the cytoplasm. It catalyses the reaction UDP-N-acetyl-alpha-D-muramoyl-L-alanine + L-glutamate + ATP = UDP-N-acetyl-alpha-D-muramoyl-L-alanyl-L-glutamate + ADP + phosphate + H(+). Its pathway is cell wall biogenesis; peptidoglycan biosynthesis. Functionally, cell wall formation. Catalyzes the addition of L-glutamate to the nucleotide precursor UDP-N-acetylmuramoyl-L-alanine. The sequence is that of UDP-N-acetylmuramoyl-L-alanine--L-glutamate ligase from Xylella fastidiosa (strain 9a5c).